Reading from the N-terminus, the 122-residue chain is Large ribosomal subunit protein uL14 (122 aa).

This sequence belongs to the universal ribosomal protein uL14 family. As to quaternary structure, part of the 50S ribosomal subunit. Forms a cluster with proteins L3 and L19. In the 70S ribosome, L14 and L19 interact and together make contacts with the 16S rRNA in bridges B5 and B8.

Its function is as follows. Binds to 23S rRNA. Forms part of two intersubunit bridges in the 70S ribosome. The sequence is that of Large ribosomal subunit protein uL14 from Sulfurimonas denitrificans (strain ATCC 33889 / DSM 1251) (Thiomicrospira denitrificans (strain ATCC 33889 / DSM 1251)).